Reading from the N-terminus, the 637-residue chain is Chaperone protein DnaK (637 aa).

Position 203 is a phosphothreonine; by autocatalysis (Thr203). The segment at 600–637 (SAVYGQQQEQGAPAQEEPSAEGKKNDDEGTVEGEFREV) is disordered. Residues 604–616 (GQQQEQGAPAQEE) show a composition bias toward low complexity. Residues 619–637 (AEGKKNDDEGTVEGEFREV) show a composition bias toward basic and acidic residues.

The protein belongs to the heat shock protein 70 family.

Functionally, acts as a chaperone. The chain is Chaperone protein DnaK from Dehalococcoides mccartyi (strain ATCC BAA-2266 / KCTC 15142 / 195) (Dehalococcoides ethenogenes (strain 195)).